The chain runs to 541 residues: MQLTVWTYEGPPHVGAMRIATGMEGLHYVLHAPQGDTYADLLFTMIERRNKRPPVTYTTFAARDLGRDTAELFMTAARDAYARFQPQAMIVGASCTGSLIQDDPGGLAKSLGFPIPVIAIDLPAYQRKENWGAAETFYQLVRALAGPNAPAPGTKRPERAAGVRPSCNLLGPTALGFRHRDDITEITGLLGKLGIDVNVVAPMGSTPADIARLGDADFNVVMYPEIAGQAASWLHRIFHQPFTKTVPIGVSATRDFIQEVTALAGIDPAPMLQASSSRLPWYSHSVDSTYLTNKRVFIFGDATHAIAAARIASEELGFKVVGLGSYSREFGRELREAAKRYDVEPLITDDYLEVEAKVAELHPELVLGTQMERHIAKRLGVPCAVISAPVHVQDFPARYAPQMGFEGANVIFDTWVHPLMMGLEEHLLTMFKDDFEFKDGAMPSHLGTGHAAPVAEAVAAPAAAVATESVATGVAAPDIASATAVAAAAAVWAPEAEKELQKIPFFVRGKARRNTERFANENGVATITVETLYDAKAHFAR.

D36 is a [4Fe-4S] cluster binding site. D287 serves as the catalytic Proton donor. 422 to 423 (GL) is a substrate binding site.

It belongs to the ChlB/BchB/BchZ family. In terms of assembly, protochlorophyllide reductase is composed of three subunits; BchL, BchN and BchB. Forms a heterotetramer of two BchB and two BchN subunits. It depends on [4Fe-4S] cluster as a cofactor.

The catalysed reaction is chlorophyllide a + oxidized 2[4Fe-4S]-[ferredoxin] + 2 ADP + 2 phosphate = protochlorophyllide a + reduced 2[4Fe-4S]-[ferredoxin] + 2 ATP + 2 H2O. Its pathway is porphyrin-containing compound metabolism; bacteriochlorophyll biosynthesis (light-independent). Component of the dark-operative protochlorophyllide reductase (DPOR) that uses Mg-ATP and reduced ferredoxin to reduce ring D of protochlorophyllide (Pchlide) to form chlorophyllide a (Chlide). This reaction is light-independent. The NB-protein (BchN-BchB) is the catalytic component of the complex. The chain is Light-independent protochlorophyllide reductase subunit B from Rhodopseudomonas palustris (strain HaA2).